A 190-amino-acid chain; its full sequence is Carbonic anhydrase 2 (190 aa).

Belongs to the beta-class carbonic anhydrase family. Homohexamer.

It is found in the cytoplasm. The catalysed reaction is hydrogencarbonate + H(+) = CO2 + H2O. In terms of biological role, reversible hydration of carbon dioxide. This Flaveria linearis (Narrowleaf yellowtops) protein is Carbonic anhydrase 2.